The primary structure comprises 266 residues: CAAX prenyl protease 2 (266 aa).

Helical transmembrane passes span 1–21 (MGAG…VHLF), 42–59 (LLSN…LRDY), and 78–98 (ITYP…MMQI). Catalysis depends on proton donor/acceptor residues E131 and H164. Helical transmembrane passes span 186 to 206 (GFQF…QLTT), 210 to 230 (IVPI…WLEI), and 239 to 259 (RLTL…LLYT).

This sequence belongs to the peptidase U48 family.

The protein resides in the endoplasmic reticulum membrane. It is found in the membrane. It carries out the reaction Hydrolyzes the peptide bond -P2-(S-farnesyl or geranylgeranyl)C-P1'-P2'-P3'-COOH where P1' and P2' are amino acids with aliphatic sidechains and P3' is any C-terminal residue.. Functionally, protease involved in the processing of a variety of prenylated proteins containing the C-terminal CAAX motif, where C is a cysteine modified with an isoprenoid lipid, A is an aliphatic amino acid and X is any C-terminal amino acid. Proteolytically removes the C-terminal three residues of farnesylated and geranylated proteins, leaving the prenylated cysteine as the new C-terminus. In Caenorhabditis elegans, this protein is CAAX prenyl protease 2.